The sequence spans 387 residues: Eukaryotic translation initiation factor 3 subunit M (387 aa).

Residues 181-340 enclose the PCI domain; it reads LSSKVMIELL…RKVHISSTMH (160 aa).

This sequence belongs to the eIF-3 subunit M family. As to quaternary structure, component of the eukaryotic translation initiation factor 3 (eIF-3) complex. The eIF-3 complex interacts with pix.

It localises to the cytoplasm. Its subcellular location is the golgi apparatus. In terms of biological role, component of the eukaryotic translation initiation factor 3 (eIF-3) complex, which is involved in protein synthesis of a specialized repertoire of mRNAs and, together with other initiation factors, stimulates binding of mRNA and methionyl-tRNAi to the 40S ribosome. The eIF-3 complex specifically targets and initiates translation of a subset of mRNAs involved in cell proliferation. The polypeptide is Eukaryotic translation initiation factor 3 subunit M (Drosophila persimilis (Fruit fly)).